The chain runs to 221 residues: Ribonuclease S-2 (221 aa).

Positions 1-20 (MIYIFTMVFSLNVLILSSSA) are cleaved as a signal peptide. Q31 is a binding site for RNA. Cysteines 37 and 44 form a disulfide. Residues H55, 91–92 (NV), F101, 104–105 (KQ), and 108–109 (KH) contribute to the RNA site. H55 acts as the Proton donor in catalysis. C70 and C112 are disulfide-bonded. An N-linked (GlcNAc...) asparagine glycan is attached at N91. Q105 is a catalytic residue. H109 serves as the catalytic Proton acceptor. N137, N153, and N195 each carry an N-linked (GlcNAc...) asparagine glycan. Cystine bridges form between C176–C214 and C191–C202.

It belongs to the RNase T2 family. Post-translationally, N-linked core structure at Asn-91, Asn-137, and Asn-153 contains xylose and at Asn-195 contains xylose and fucose.

It is found in the secreted. It localises to the extracellular space. It carries out the reaction a ribonucleotidyl-ribonucleotide-RNA + H2O = a 3'-end 3'-phospho-ribonucleotide-RNA + a 5'-end dephospho-ribonucleoside-RNA + H(+). Functionally, self-incompatibility (SI) is the inherited ability of a flowering plant to prevent self-fertilization by discriminating between self and non-self pollen during pollination. In many species, self-incompatibility is controlled by the single, multiallelic locus S. This chain is Ribonuclease S-2, found in Pyrus pyrifolia (Chinese pear).